The following is a 213-amino-acid chain: Protein Syd (213 aa).

It belongs to the Syd family.

It localises to the cell inner membrane. Its function is as follows. Interacts with the SecY protein in vivo. May bind preferentially to an uncomplexed state of SecY, thus functioning either as a chelating agent for excess SecY in the cell or as a regulatory factor that negatively controls the translocase function. The sequence is that of Protein Syd from Shewanella halifaxensis (strain HAW-EB4).